The chain runs to 60 residues: MATPKQKASRGQTHSRRAKFYSAYKINVVKCPKCGEPKLPHRVCLNCGYYGDKQILEIGE.

Belongs to the bacterial ribosomal protein bL32 family.

The polypeptide is Large ribosomal subunit protein bL32 (Petrotoga mobilis (strain DSM 10674 / SJ95)).